The following is a 552-amino-acid chain: Alcohol dehydrogenase [acceptor] (552 aa).

3-32 (DYIIVGAGSAGCVLANRLSADPSKRVCLLE) provides a ligand contact to FAD. The Proton acceptor role is filled by H469.

It belongs to the GMC oxidoreductase family. Requires FAD as cofactor.

Its subcellular location is the cell inner membrane. The enzyme catalyses a primary alcohol + A = an aldehyde + AH2. Functionally, converts aliphatic medium-chain-length alcohols into aldehydes. May be linked to the electron transfer chain. The polypeptide is Alcohol dehydrogenase [acceptor] (alkJ) (Pseudomonas putida (Arthrobacter siderocapsulatus)).